The primary structure comprises 401 residues: Heat shock transcription factor, Y-linked (401 aa).

A compositionally biased stretch (polar residues) spans 1-11; that stretch reads MAHVSSETQDV. Residues 1-30 form a disordered region; that stretch reads MAHVSSETQDVSPKDELTASEASTRSPLCE. The DNA-binding element occupies 76–194; the sequence is LSLNFPRKLW…PQLLVRVKRR (119 aa).

It belongs to the HSF family. Testis-specific. Present in Sertoli cells and spermatogenic cells (at protein level).

Its subcellular location is the nucleus. The protein resides in the cytoplasm. This Homo sapiens (Human) protein is Heat shock transcription factor, Y-linked (HSFY1).